We begin with the raw amino-acid sequence, 1147 residues long: Protein lin-41 (1147 aa).

Residues 1–93 are disordered; sequence MATIVPCSLE…PPSMIQSPQQ (93 aa). Low complexity predominate over residues 33 to 47; that stretch reads SGNELSMGGSSSEGD. Basic and acidic residues predominate over residues 48–65; that stretch reads SMSHHRGEHSPNHHHQDN. Positions 84 to 93 are enriched in low complexity; the sequence is PPSMIQSPQQ. The RING-type zinc finger occupies 114-155; sequence CSVCSKSSTIGVLPFVCAHKTCQSCYQMTPSSYDRRACKLCG. The segment at 366–412 adopts a B box-type; atypical zinc-finger fold; it reads MGPIQCQGCESKISFAYCMQCQEALCIHCVQAHQRVRATKQHAFVEL. Zn(2+)-binding residues include cysteine 371, cysteine 374, cysteine 394, and histidine 398. Residues 565–618 are a coiled coil; that stretch reads AFDTHVNALEERRKELLKRVETVKNLKLSVLISQAESLQSKQIDLQQAIQTATK. The stretch at 723–817 is one Filamin repeat; that stretch reads ACGDLLSSSI…ISGCPTTMDI (95 aa). NHL repeat units lie at residues 832–875, 879–922, 926–969, 974–1017, 1022–1065, and 1107–1147; these read ILTF…FDKD, ISKF…FDEN, LLKF…FTPQ, RKCG…LSPR, MKVY…FASD, and SAPT…IRVF. The interval 1104–1123 is disordered; the sequence is AFSSAPTPLTPSPRQLLDRP.

The protein belongs to the TRIM/RBCC family.

Its subcellular location is the cytoplasm. It is found in the P-body. Functionally, heterochronic protein which acts downstream of let-7 in temporal patterning. Plays a role in the developmental timing of postembryonic hypodermal seam cell division and fusion events and adult alae production. Represses lin-29 during late larval stages, which prevents terminal differentiation of hypodermal seam cells and promotes their division. Involved in post-transcriptional gene regulation, uses two independent pathways. Has direct and specific RNA-binding activity and, depending on the location (5'UTR or 3'UTR) of the target site, triggers either mRNA decay or repression of translation. Degrades the mRNA of transcription factor dmd-3 to govern the timing and extent of male tail tip morphogenesis. Plays a role in the sexual maturation of the nervous system. The polypeptide is Protein lin-41 (Caenorhabditis elegans).